The following is a 266-amino-acid chain: Putative pyruvate, phosphate dikinase regulatory protein (266 aa).

149-156 contacts ADP; that stretch reads GVSRTSKT.

It belongs to the pyruvate, phosphate/water dikinase regulatory protein family. PDRP subfamily.

The catalysed reaction is N(tele)-phospho-L-histidyl/L-threonyl-[pyruvate, phosphate dikinase] + ADP = N(tele)-phospho-L-histidyl/O-phospho-L-threonyl-[pyruvate, phosphate dikinase] + AMP + H(+). It carries out the reaction N(tele)-phospho-L-histidyl/O-phospho-L-threonyl-[pyruvate, phosphate dikinase] + phosphate + H(+) = N(tele)-phospho-L-histidyl/L-threonyl-[pyruvate, phosphate dikinase] + diphosphate. Functionally, bifunctional serine/threonine kinase and phosphorylase involved in the regulation of the pyruvate, phosphate dikinase (PPDK) by catalyzing its phosphorylation/dephosphorylation. This chain is Putative pyruvate, phosphate dikinase regulatory protein, found in Halothermothrix orenii (strain H 168 / OCM 544 / DSM 9562).